Reading from the N-terminus, the 305-residue chain is tRNA uridine(34) hydroxylase (305 aa).

Positions 124–219 (QDEETLVVDT…YLETIPKEES (96 aa)) constitute a Rhodanese domain. Cys179 (cysteine persulfide intermediate) is an active-site residue.

It belongs to the TrhO family.

It carries out the reaction uridine(34) in tRNA + AH2 + O2 = 5-hydroxyuridine(34) in tRNA + A + H2O. Its function is as follows. Catalyzes oxygen-dependent 5-hydroxyuridine (ho5U) modification at position 34 in tRNAs. The protein is tRNA uridine(34) hydroxylase of Bartonella bacilliformis (strain ATCC 35685 / KC583 / Herrer 020/F12,63).